A 357-amino-acid polypeptide reads, in one-letter code: Uroporphyrinogen decarboxylase (357 aa).

Substrate contacts are provided by residues 34 to 38 (RQAGR), Asp83, Tyr158, Ser213, and His336.

It belongs to the uroporphyrinogen decarboxylase family. As to quaternary structure, homodimer.

It localises to the cytoplasm. The catalysed reaction is uroporphyrinogen III + 4 H(+) = coproporphyrinogen III + 4 CO2. Its pathway is porphyrin-containing compound metabolism; protoporphyrin-IX biosynthesis; coproporphyrinogen-III from 5-aminolevulinate: step 4/4. Functionally, catalyzes the decarboxylation of four acetate groups of uroporphyrinogen-III to yield coproporphyrinogen-III. This chain is Uroporphyrinogen decarboxylase, found in Mycolicibacterium paratuberculosis (strain ATCC BAA-968 / K-10) (Mycobacterium paratuberculosis).